A 1095-amino-acid chain; its full sequence is DNA polymerase delta catalytic subunit (1095 aa).

Positions 1 to 11 (MNRSGISKKRP) are enriched in basic residues. The segment at 1–37 (MNRSGISKKRPPPSNTPPPAGKHRATGDSTPSPAIGT) is disordered. 4 residues coordinate Zn(2+): C1007, C1010, C1020, and C1023. Residues 1007 to 1023 (CVGCKVPISNGTLCASC) form a CysA-type zinc finger. [4Fe-4S] cluster is bound by residues C1052, C1055, C1065, and C1070. Residues 1052–1070 (CQECQGSLHQDVLCTSRDC) carry the CysB motif motif.

The protein belongs to the DNA polymerase type-B family. In terms of assembly, heterodimer with subunits of 125 kDa and 50 kDa. The 125 kDa subunit contains the polymerase active site and most likely the active site for the 3'-5' exonuclease activity. Requires [4Fe-4S] cluster as cofactor.

It is found in the nucleus. It catalyses the reaction DNA(n) + a 2'-deoxyribonucleoside 5'-triphosphate = DNA(n+1) + diphosphate. Functionally, this polymerase possesses two enzymatic activities: DNA synthesis (polymerase) and an exonucleolytic activity that degrades single-stranded DNA in the 3'- to 5'-direction. The sequence is that of DNA polymerase delta catalytic subunit (POLD1) from Arabidopsis thaliana (Mouse-ear cress).